The following is a 251-amino-acid chain: Ubiquinone/menaquinone biosynthesis C-methyltransferase UbiE (251 aa).

Residues T74, D95, and N123 to A124 each bind S-adenosyl-L-methionine.

It belongs to the class I-like SAM-binding methyltransferase superfamily. MenG/UbiE family.

The enzyme catalyses a 2-demethylmenaquinol + S-adenosyl-L-methionine = a menaquinol + S-adenosyl-L-homocysteine + H(+). The catalysed reaction is a 2-methoxy-6-(all-trans-polyprenyl)benzene-1,4-diol + S-adenosyl-L-methionine = a 5-methoxy-2-methyl-3-(all-trans-polyprenyl)benzene-1,4-diol + S-adenosyl-L-homocysteine + H(+). It participates in quinol/quinone metabolism; menaquinone biosynthesis; menaquinol from 1,4-dihydroxy-2-naphthoate: step 2/2. The protein operates within cofactor biosynthesis; ubiquinone biosynthesis. Methyltransferase required for the conversion of demethylmenaquinol (DMKH2) to menaquinol (MKH2) and the conversion of 2-polyprenyl-6-methoxy-1,4-benzoquinol (DDMQH2) to 2-polyprenyl-3-methyl-6-methoxy-1,4-benzoquinol (DMQH2). The chain is Ubiquinone/menaquinone biosynthesis C-methyltransferase UbiE from Shewanella halifaxensis (strain HAW-EB4).